Here is a 94-residue protein sequence, read N- to C-terminus: Preprofallaxidin-9 (94 aa).

Residues Met-1–Cys-22 form the signal peptide. Residues Glu-23–Arg-46 constitute a propeptide that is removed on maturation. Positions Arg-27–Arg-46 are disordered. Positions Glu-30–Ser-42 are enriched in acidic residues. Position 62 is a leucine amide (Leu-62). The propeptide occupies Ser-66–Arg-70. A Methionine amide modification is found at Met-75. Residues Ser-79–Arg-83 constitute a propeptide that is removed on maturation. Methionine amide is present on Met-88. A propeptide spanning residues Ser-92 to Glu-94 is cleaved from the precursor.

This sequence belongs to the frog skin active peptide (FSAP) family. Brevinin subfamily. As to expression, expressed by the skin glands.

It is found in the secreted. Functionally, fallaxidin-1.3 shows no antibacterial activity against Gram-positive or Gram-negative bacteria. Does not inhibit the formation of NO by neuronal nitric oxide synthase. Has no effect on splenocyte proliferation or smooth muscle contraction. Fallaxidin-3.2 shows antibacterial activity against the Gram-positive bacteria E.faecalis (MIC=100 uM) and L.lactis (MIC=500 uM). No antibacterial activity against the Gram-positive bacteria B.cereus, L.innocua, M.luteus, S.epidermidis, S.uberis and S.aureus, or the Gram-negative bacteria E.cloacae and E.coli. The sequence is that of Preprofallaxidin-9 from Litoria fallax (Eastern dwarf tree frog).